Reading from the N-terminus, the 395-residue chain is Cytoplasmic tRNA 2-thiolation protein 1 (395 aa).

Positions 297–309 (TVAYKNKNKNKKK) are enriched in basic residues. Residues 297 to 335 (TVAYKNKNKNKKKSNSEQEEQEKQEQEVNPDGSISLNRN) are disordered.

The protein belongs to the TtcA family. CTU1/NCS6/ATPBD3 subfamily.

It localises to the cytoplasm. The protein operates within tRNA modification; 5-methoxycarbonylmethyl-2-thiouridine-tRNA biosynthesis. Functionally, plays a central role in 2-thiolation of mcm(5)S(2)U at tRNA wobble positions of tRNA(Lys), tRNA(Glu) and tRNA(Gln). Directly binds tRNAs and probably acts by catalyzing adenylation of tRNAs, an intermediate required for 2-thiolation. It is unclear whether it acts as a sulfurtransferase that transfers sulfur from thiocarboxylated URM1 onto the uridine of tRNAs at wobble position. Prior mcm(5) tRNA modification by the elongator complex is required for 2-thiolation. May also be involved in protein urmylation. The sequence is that of Cytoplasmic tRNA 2-thiolation protein 1 from Candida albicans (strain SC5314 / ATCC MYA-2876) (Yeast).